The following is a 1353-amino-acid chain: ABC-type transporter MYCGRDRAFT_41235 (1353 aa).

Residues 40-60 (ASASLWNWFFFSWLNPLIAIG) form a helical membrane-spanning segment. N-linked (GlcNAc...) asparagine glycosylation is present at N121. Helical transmembrane passes span 124–144 (VLVWFWVGGAMKLFADVATIT), 172–192 (IGQGFGMAIGLALLLASGVMA), 250–270 (FACGYFHATWTSVIQILICLG), 271–291 (LTIASLGPAALTGFGLMAILV), 364–384 (VALSFSVPTLAAVVSFVTYAA), and 397–417 (ALTLFMLLRTPLLLLPVAFGA). Residues 129–420 (WVGGAMKLFA…LPVAFGAAAD (292 aa)) form the ABC transmembrane type-1 1 domain. In terms of domain architecture, ABC transporter 1 spans 460–684 (YRVQDHSDEK…EGGQMRRVVE (225 aa)). N481 is a glycosylation site (N-linked (GlcNAc...) asparagine). Residue 496–503 (GPVGAGKS) coordinates ATP. The tract at residues 687 to 720 (ASKSSAEEEEVEDGDLKDGVPSTDGGDASQTTSN) is disordered. The next 6 membrane-spanning stretches (helical) occupy residues 748–768 (PAFTLTFFILSMLIFQGGSIL), 796–816 (LGVSQAIGLLAMSSIFGFFIF), 864–882 (AFRMLLSTVAQVVGAVVLI), 888–907 (WFLLAVFVIVILYILTGMYY), 973–993 (LSVRLDLLGTCLVLLVGLIVV), and 1002–1022 (AQGGVALSYIVTVQAVFGFMI). One can recognise an ABC transmembrane type-1 2 domain in the interval 756–1030 (ILSMLIFQGG…MIRQSAEIEN (275 aa)). Residues 1070 to 1334 (IEMRDVVFTH…EGGHFRSLCS (265 aa)) form the ABC transporter 2 domain. Residue 1104–1111 (GRTGSGKS) coordinates ATP. A compositionally biased stretch (polar residues) spans 1191–1200 (QSSAETLTSS). The segment at 1191-1223 (QSSAETLTSSDQEKSSPDDAAISPSSHSHSQHL) is disordered. Positions 1208–1218 (DDAAISPSSHS) are enriched in low complexity.

It belongs to the ABC transporter superfamily. ABCC family. Conjugate transporter (TC 3.A.1.208) subfamily.

It is found in the cell membrane. In terms of biological role, multidrug resistance protein; part of the gene cluster 14 that mediates the biosynthesis of a ferrichrome A-like siderophors which may contribute to organismal virulence. This Zymoseptoria tritici (strain CBS 115943 / IPO323) (Speckled leaf blotch fungus) protein is ABC-type transporter MYCGRDRAFT_41235.